A 337-amino-acid polypeptide reads, in one-letter code: 3-isopropylmalate dehydrogenase (337 aa).

The substrate site is built by Arg88, Arg98, Arg122, and Asp212. Residues Asp212, Asp236, and Asp240 each contribute to the Mg(2+) site. 272-284 (GSAPDIAGKGIAD) contributes to the NAD(+) binding site.

Belongs to the isocitrate and isopropylmalate dehydrogenases family. LeuB type 2 subfamily. Homodimer. Mg(2+) serves as cofactor. Mn(2+) is required as a cofactor.

It is found in the cytoplasm. The enzyme catalyses (2R,3S)-3-isopropylmalate + NAD(+) = 4-methyl-2-oxopentanoate + CO2 + NADH. It functions in the pathway amino-acid biosynthesis; L-leucine biosynthesis; L-leucine from 3-methyl-2-oxobutanoate: step 3/4. Functionally, catalyzes the oxidation of 3-carboxy-2-hydroxy-4-methylpentanoate (3-isopropylmalate) to 3-carboxy-4-methyl-2-oxopentanoate. The product decarboxylates to 4-methyl-2 oxopentanoate. This chain is 3-isopropylmalate dehydrogenase, found in Rhodococcus erythropolis (strain PR4 / NBRC 100887).